The sequence spans 338 residues: tRNA N6-adenosine threonylcarbamoyltransferase (338 aa).

Residues H110, H114, and Y131 each contribute to the Fe cation site. Residues 131 to 135 (YVSGG), D163, D184, and N268 contribute to the substrate site. Residue D296 participates in Fe cation binding.

This sequence belongs to the KAE1 / TsaD family. Requires Fe(2+) as cofactor.

It localises to the cytoplasm. It catalyses the reaction L-threonylcarbamoyladenylate + adenosine(37) in tRNA = N(6)-L-threonylcarbamoyladenosine(37) in tRNA + AMP + H(+). Required for the formation of a threonylcarbamoyl group on adenosine at position 37 (t(6)A37) in tRNAs that read codons beginning with adenine. Is probably involved in the transfer of the threonylcarbamoyl moiety of threonylcarbamoyl-AMP (TC-AMP) to the N6 group of A37. This Staphylothermus marinus (strain ATCC 43588 / DSM 3639 / JCM 9404 / F1) protein is tRNA N6-adenosine threonylcarbamoyltransferase.